The chain runs to 504 residues: uncharacterized protein (504 aa).

Positions 36–60 (TAFRMEKEQRLPSQNKPPRGRRRPD) are disordered. One can recognise an Integrase catalytic domain in the interval 125-309 (QTHEPGRLGL…RPHLQVLPER (185 aa)).

This is an uncharacterized protein from Sinorhizobium fredii (strain NBRC 101917 / NGR234).